Reading from the N-terminus, the 491-residue chain is Acetyl-coenzyme A carboxylase carboxyl transferase subunit beta, chloroplastic (491 aa).

One can recognise a CoA carboxyltransferase N-terminal domain in the interval 224–491 (LWIQCENCYG…FFPLNPKKIK (268 aa)). Zn(2+) contacts are provided by cysteine 228, cysteine 231, cysteine 247, and cysteine 250. A C4-type zinc finger spans residues 228-250 (CENCYGLNYKKNLKSKINICEQC).

Belongs to the AccD/PCCB family. In terms of assembly, acetyl-CoA carboxylase is a heterohexamer composed of biotin carboxyl carrier protein, biotin carboxylase and 2 subunits each of ACCase subunit alpha and ACCase plastid-coded subunit beta (accD). Zn(2+) is required as a cofactor.

It is found in the plastid. It localises to the chloroplast stroma. The enzyme catalyses N(6)-carboxybiotinyl-L-lysyl-[protein] + acetyl-CoA = N(6)-biotinyl-L-lysyl-[protein] + malonyl-CoA. It participates in lipid metabolism; malonyl-CoA biosynthesis; malonyl-CoA from acetyl-CoA: step 1/1. In terms of biological role, component of the acetyl coenzyme A carboxylase (ACC) complex. Biotin carboxylase (BC) catalyzes the carboxylation of biotin on its carrier protein (BCCP) and then the CO(2) group is transferred by the transcarboxylase to acetyl-CoA to form malonyl-CoA. This is Acetyl-coenzyme A carboxylase carboxyl transferase subunit beta, chloroplastic from Vitis vinifera (Grape).